The primary structure comprises 145 residues: Aminoglycoside N(6')-acetyltransferase type 1 (145 aa).

Residues 1 to 145 enclose the N-acetyltransferase domain; the sequence is MDIRQMNRTH…ERVIFYRKRC (145 aa). Substrate is bound by residues Trp-22, His-25, Tyr-66, and Glu-79. Acetyl-CoA contacts are provided by residues 81–83 and 89–94; these read IFV and QRGVAK. Residue Asp-115 participates in substrate binding. Residue Asn-120 participates in acetyl-CoA binding. Glu-136 is a binding site for substrate.

In terms of assembly, homodimer.

It carries out the reaction kanamycin B + acetyl-CoA = N(6')-acetylkanamycin B + CoA + H(+). Its function is as follows. Catalyzes the transfer of an acetyl group from acetyl-CoA to the 6'-amino group of aminoglycoside molecules conferring resistance to antibiotics containing the purpurosamine ring. The protein is Aminoglycoside N(6')-acetyltransferase type 1 of Salmonella typhimurium (strain LT2 / SGSC1412 / ATCC 700720).